The sequence spans 24 residues: Brevinin-1R (24 aa).

The cysteines at positions 18 and 24 are disulfide-linked.

In terms of tissue distribution, expressed by the skin glands.

It is found in the secreted. In terms of biological role, antimicrobial peptide. The chain is Brevinin-1R from Pelophylax ridibundus (Marsh frog).